We begin with the raw amino-acid sequence, 244 residues long: tRNA pseudouridine synthase A (244 aa).

D52 functions as the Nucleophile in the catalytic mechanism. Substrate is bound at residue Y111.

This sequence belongs to the tRNA pseudouridine synthase TruA family. In terms of assembly, homodimer.

The enzyme catalyses uridine(38/39/40) in tRNA = pseudouridine(38/39/40) in tRNA. Functionally, formation of pseudouridine at positions 38, 39 and 40 in the anticodon stem and loop of transfer RNAs. The sequence is that of tRNA pseudouridine synthase A from Thermosipho africanus (strain TCF52B).